The sequence spans 389 residues: Krueppel-like factor 17 (389 aa).

2 disordered regions span residues 1–48 (MYGR…SGVH) and 239–279 (LVSQ…GSSE). Residues 26 to 38 (AQDNENSAPILNM) show a composition bias toward polar residues. Positions 264 to 278 (KNSRPQEGTGRRGSS) are enriched in basic and acidic residues. 3 C2H2-type zinc fingers span residues 283–307 (YCCN…QRKH), 313–337 (YSCN…MRVH), and 343–365 (YKCD…QKTH). Positions 356-389 (DHLKQHQKTHRPGPSDPQANNNNGEQDSPPAAGP) are disordered. Over residues 372–381 (PQANNNNGEQ) the composition is skewed to polar residues.

The protein belongs to the Sp1 C2H2-type zinc-finger protein family.

It is found in the nucleus. Its function is as follows. Transcription repressor that binds to the promoter of target genes and prevents their expression. Acts as a negative regulator of epithelial-mesenchymal transition and metastasis in breast cancer. Specifically binds the 5'-CACCC-3' sequence in the promoter of ID1, a key metastasis regulator in breast cancer, and repress its expression. May be a germ cell-specific transcription factor that plays important roles in spermatid differentiation and oocyte development. The protein is Krueppel-like factor 17 (KLF17) of Homo sapiens (Human).